The sequence spans 610 residues: Modifier of mdg4 (610 aa).

The self-association stretch occupies residues Met-1–Lys-160. Residues Met-1–Met-308 are interaction with Chi. The BTB domain maps to Val-32–Gln-98. 4 disordered regions span residues Gly-115 to Ser-156, Val-219 to Thr-259, Pro-311 to Tyr-339, and Glu-386 to Lys-432. The segment covering Ala-122 to Ala-135 has biased composition (pro residues). Residues Pro-136–Ser-156 are compositionally biased toward low complexity. Positions Asn-222–Ala-238 are enriched in polar residues. A Phosphoserine modification is found at Ser-230. Residues Thr-312–Ala-325 show a composition bias toward basic and acidic residues. Residues Glu-386 to Glu-400 show a composition bias toward polar residues. Low complexity predominate over residues Ala-401 to Thr-410. The segment covering Thr-422 to Lys-432 has biased composition (basic and acidic residues). An FLYWCH-type zinc finger spans residues Tyr-452–His-512. Residues Leu-551–Lys-610 are interaction with su(Hw). The span at Ile-567–Glu-577 shows a compositional bias: acidic residues. The disordered stretch occupies residues Ile-567 to Glu-595. A compositionally biased stretch (basic and acidic residues) spans Pro-578–Glu-595.

In terms of assembly, can self-associate. Interacts with Chi. Interacts with Top2. Isoform mod2.2: Component of the gypsy chromatin insulator complex, composed of Cp190, mod(mdg4) and su(Hw). The gypsy chromatin insulator complex interacts with Topors via mod(mdg4) and su(Hw). Isoform mod2.2 interacts with Trl/GAGA and interaction with this protein may bypass the repressive effects of the su(Hw) insulator.

It localises to the nucleus. The protein localises to the chromosome. Its function is as follows. Component of the gypsy chromatin insulator complex which is required for the function of the gypsy chromatin insulator and other endogenous chromatin insulators. Chromatin insulators are regulatory elements which establish independent domains of transcriptional activity within eukaryotic genomes. Insulators have two defining properties; they can block the communication between an enhancer and a promoter when placed between them and can also buffer transgenes from position effect variegation (PEV). Insulators are proposed to structure the chromatin fiber into independent domains of differing transcriptional potential by promoting the formation of distinct chromatin loops. This chromatin looping may involve the formation of insulator bodies, where homotypic interactions between individual subunits of the insulator complex could promote the clustering of widely spaced insulators at the nuclear periphery. Within the gypsy insulator complex, this protein may control the nature of the repressive effect of su(Hw): in the absence of mod(mdg4) protein, su(Hw) exerts a bidirectional silencing effect, whereas in the presence of mod(mdg4), the silencing effect is unidirectional. Isoform H is specifically required to maintain the pairing of achiasmate homologs in male meiosis I which is mediated by the rDNA repeats on the achiasmate X-Y bivalents. Isoform H also plays a role in apoptotic regulatory pathways. The polypeptide is Modifier of mdg4 (Drosophila melanogaster (Fruit fly)).